The chain runs to 430 residues: MFVDQVKISLKAGDGGNGITAYRREKYVPFGGPAGGDGGKGASVVFEVDEGLRTLLDFRYQRHFKASKGENGQSSNMHGKNAEDLVLKVPPGTIIKNVETDEVLADLVEDGQRAVVAKGGRGGRGNSRFATPRNPAPDFSEKGEPGEELDVSLELKLLADVGLVGFPSVGKSTLLSIVSKAKPKIGAYHFTTIKPNLGVVSTPDQRSFVMADLPGLIEGASDGVGLGHQFLRHVERTKVIVHMIDMSGSEGREPIEDYKVINQELAAYEQRLEDRPQIVVANKMDLPESQDNLILFKEEIGEDVPVIPVSTITRDNIDQLLYAIADKLEEYKDVDFTVEEEESVGINRVLYKHTPSQDKFTISRDDDGAYVVSGNAIERMFKMTDFNSDPAVRRFARQMRSMGIDDALRERGCKNGDIVRILGGEFEFVE.

The Obg domain occupies 1–158; the sequence is MFVDQVKISL…LDVSLELKLL (158 aa). The disordered stretch occupies residues 118–145; the sequence is KGGRGGRGNSRFATPRNPAPDFSEKGEP. In terms of domain architecture, OBG-type G spans 159 to 329; it reads ADVGLVGFPS…LLYAIADKLE (171 aa). GTP is bound by residues 165–172, 190–194, 212–215, 282–285, and 310–312; these read GFPSVGKS, FTTIK, DLPG, NKMD, and STI. Mg(2+) is bound by residues S172 and T192. One can recognise an OCT domain in the interval 352–430; it reads KHTPSQDKFT…ILGGEFEFVE (79 aa).

Belongs to the TRAFAC class OBG-HflX-like GTPase superfamily. OBG GTPase family. In terms of assembly, monomer. Requires Mg(2+) as cofactor.

The protein localises to the cytoplasm. Its function is as follows. An essential GTPase which binds GTP, GDP and possibly (p)ppGpp with moderate affinity, with high nucleotide exchange rates and a fairly low GTP hydrolysis rate. Plays a role in control of the cell cycle, stress response, ribosome biogenesis and in those bacteria that undergo differentiation, in morphogenesis control. The polypeptide is GTPase Obg (Staphylococcus aureus (strain MRSA252)).